The chain runs to 596 residues: Elongation factor 4 (596 aa).

Residues 2–184 (RNIRNFSIIA…AIVHRIPPPK (183 aa)) enclose the tr-type G domain. GTP contacts are provided by residues 14-19 (DHGKST) and 131-134 (NKID).

The protein belongs to the TRAFAC class translation factor GTPase superfamily. Classic translation factor GTPase family. LepA subfamily.

The protein localises to the cell inner membrane. The enzyme catalyses GTP + H2O = GDP + phosphate + H(+). Required for accurate and efficient protein synthesis under certain stress conditions. May act as a fidelity factor of the translation reaction, by catalyzing a one-codon backward translocation of tRNAs on improperly translocated ribosomes. Back-translocation proceeds from a post-translocation (POST) complex to a pre-translocation (PRE) complex, thus giving elongation factor G a second chance to translocate the tRNAs correctly. Binds to ribosomes in a GTP-dependent manner. This chain is Elongation factor 4, found in Xanthomonas euvesicatoria pv. vesicatoria (strain 85-10) (Xanthomonas campestris pv. vesicatoria).